The sequence spans 304 residues: Ribonuclease Z (304 aa).

Residues histidine 63, histidine 65, aspartate 67, histidine 68, histidine 143, aspartate 213, and histidine 271 each contribute to the Zn(2+) site. The active-site Proton acceptor is aspartate 67.

Belongs to the RNase Z family. As to quaternary structure, homodimer. Zn(2+) serves as cofactor.

The enzyme catalyses Endonucleolytic cleavage of RNA, removing extra 3' nucleotides from tRNA precursor, generating 3' termini of tRNAs. A 3'-hydroxy group is left at the tRNA terminus and a 5'-phosphoryl group is left at the trailer molecule.. In terms of biological role, zinc phosphodiesterase, which displays some tRNA 3'-processing endonuclease activity. Probably involved in tRNA maturation, by removing a 3'-trailer from precursor tRNA. The polypeptide is Ribonuclease Z (Bacteroides fragilis (strain ATCC 25285 / DSM 2151 / CCUG 4856 / JCM 11019 / LMG 10263 / NCTC 9343 / Onslow / VPI 2553 / EN-2)).